The primary structure comprises 464 residues: ATP synthase subunit beta (464 aa).

Glycine 150–threonine 157 is an ATP binding site.

It belongs to the ATPase alpha/beta chains family. F-type ATPases have 2 components, CF(1) - the catalytic core - and CF(0) - the membrane proton channel. CF(1) has five subunits: alpha(3), beta(3), gamma(1), delta(1), epsilon(1). CF(0) has three main subunits: a(1), b(2) and c(9-12). The alpha and beta chains form an alternating ring which encloses part of the gamma chain. CF(1) is attached to CF(0) by a central stalk formed by the gamma and epsilon chains, while a peripheral stalk is formed by the delta and b chains.

Its subcellular location is the cell membrane. It catalyses the reaction ATP + H2O + 4 H(+)(in) = ADP + phosphate + 5 H(+)(out). In terms of biological role, produces ATP from ADP in the presence of a proton gradient across the membrane. The catalytic sites are hosted primarily by the beta subunits. The polypeptide is ATP synthase subunit beta (Dehalococcoides mccartyi (strain ATCC BAA-2100 / JCM 16839 / KCTC 5957 / BAV1)).